Consider the following 293-residue polypeptide: Bifunctional protein FolD (293 aa).

NADP(+) is bound by residues 164–166 (GRS), Ser193, and Thr234.

Belongs to the tetrahydrofolate dehydrogenase/cyclohydrolase family. As to quaternary structure, homodimer.

The enzyme catalyses (6R)-5,10-methylene-5,6,7,8-tetrahydrofolate + NADP(+) = (6R)-5,10-methenyltetrahydrofolate + NADPH. It catalyses the reaction (6R)-5,10-methenyltetrahydrofolate + H2O = (6R)-10-formyltetrahydrofolate + H(+). The protein operates within one-carbon metabolism; tetrahydrofolate interconversion. Functionally, catalyzes the oxidation of 5,10-methylenetetrahydrofolate to 5,10-methenyltetrahydrofolate and then the hydrolysis of 5,10-methenyltetrahydrofolate to 10-formyltetrahydrofolate. The sequence is that of Bifunctional protein FolD from Bacteroides thetaiotaomicron (strain ATCC 29148 / DSM 2079 / JCM 5827 / CCUG 10774 / NCTC 10582 / VPI-5482 / E50).